The primary structure comprises 169 residues: Endoribonuclease YbeY (169 aa).

The Zn(2+) site is built by His-130, His-134, and His-140.

This sequence belongs to the endoribonuclease YbeY family. Requires Zn(2+) as cofactor.

It localises to the cytoplasm. In terms of biological role, single strand-specific metallo-endoribonuclease involved in late-stage 70S ribosome quality control and in maturation of the 3' terminus of the 16S rRNA. This is Endoribonuclease YbeY from Neisseria meningitidis serogroup B (strain ATCC BAA-335 / MC58).